A 345-amino-acid polypeptide reads, in one-letter code: tRNA-dihydrouridine(20/20a) synthase (345 aa).

FMN is bound by residues 26–28 (PML) and Gln78. Cys108 (proton donor) is an active-site residue. FMN is bound by residues Lys147, His180, 220–222 (NGG), and 242–243 (GR).

This sequence belongs to the Dus family. DusA subfamily. Requires FMN as cofactor.

It catalyses the reaction 5,6-dihydrouridine(20) in tRNA + NADP(+) = uridine(20) in tRNA + NADPH + H(+). The catalysed reaction is 5,6-dihydrouridine(20) in tRNA + NAD(+) = uridine(20) in tRNA + NADH + H(+). The enzyme catalyses 5,6-dihydrouridine(20a) in tRNA + NADP(+) = uridine(20a) in tRNA + NADPH + H(+). It carries out the reaction 5,6-dihydrouridine(20a) in tRNA + NAD(+) = uridine(20a) in tRNA + NADH + H(+). Catalyzes the synthesis of 5,6-dihydrouridine (D), a modified base found in the D-loop of most tRNAs, via the reduction of the C5-C6 double bond in target uridines. Specifically modifies U20 and U20a in tRNAs. This Yersinia pestis protein is tRNA-dihydrouridine(20/20a) synthase.